A 332-amino-acid polypeptide reads, in one-letter code: HPr kinase/phosphorylase (332 aa).

Residues His153 and Lys174 contribute to the active site. Residue 168-175 (GKSGLGKS) participates in ATP binding. Ser175 contributes to the Mg(2+) binding site. Asp192 (proton acceptor; for phosphorylation activity. Proton donor; for dephosphorylation activity) is an active-site residue. Residues 217 to 226 (MEIRGLGVVD) form an important for the catalytic mechanism of both phosphorylation and dephosphorylation region. Residue Glu218 participates in Mg(2+) binding. Residue Arg259 is part of the active site. The interval 280-285 (PIFPGK) is important for the catalytic mechanism of dephosphorylation.

This sequence belongs to the HPrK/P family. Homohexamer. It depends on Mg(2+) as a cofactor.

It catalyses the reaction [HPr protein]-L-serine + ATP = [HPr protein]-O-phospho-L-serine + ADP + H(+). The catalysed reaction is [HPr protein]-O-phospho-L-serine + phosphate + H(+) = [HPr protein]-L-serine + diphosphate. Its function is as follows. Catalyzes the ATP- as well as the pyrophosphate-dependent phosphorylation of a specific serine residue in HPr, a phosphocarrier protein of the phosphoenolpyruvate-dependent sugar phosphotransferase system (PTS). HprK/P also catalyzes the pyrophosphate-producing, inorganic phosphate-dependent dephosphorylation (phosphorolysis) of seryl-phosphorylated HPr (P-Ser-HPr). This chain is HPr kinase/phosphorylase, found in Chlorobium luteolum (strain DSM 273 / BCRC 81028 / 2530) (Pelodictyon luteolum).